A 287-amino-acid polypeptide reads, in one-letter code: Ribosomal RNA small subunit methyltransferase A (287 aa).

Residues Asn18, Leu20, Gly45, Glu66, Asp91, and Asn118 each coordinate S-adenosyl-L-methionine.

It belongs to the class I-like SAM-binding methyltransferase superfamily. rRNA adenine N(6)-methyltransferase family. RsmA subfamily.

It is found in the cytoplasm. It carries out the reaction adenosine(1518)/adenosine(1519) in 16S rRNA + 4 S-adenosyl-L-methionine = N(6)-dimethyladenosine(1518)/N(6)-dimethyladenosine(1519) in 16S rRNA + 4 S-adenosyl-L-homocysteine + 4 H(+). In terms of biological role, specifically dimethylates two adjacent adenosines (A1518 and A1519) in the loop of a conserved hairpin near the 3'-end of 16S rRNA in the 30S particle. May play a critical role in biogenesis of 30S subunits. In Haemophilus influenzae (strain ATCC 51907 / DSM 11121 / KW20 / Rd), this protein is Ribosomal RNA small subunit methyltransferase A.